The chain runs to 153 residues: Nucleoside diphosphate kinase (153 aa).

Residues lysine 9, phenylalanine 57, arginine 85, threonine 91, arginine 102, and asparagine 112 each coordinate ATP. Residue histidine 115 is the Pros-phosphohistidine intermediate of the active site.

This sequence belongs to the NDK family. In terms of assembly, homotetramer. Mg(2+) is required as a cofactor.

The protein resides in the cytoplasm. The catalysed reaction is a 2'-deoxyribonucleoside 5'-diphosphate + ATP = a 2'-deoxyribonucleoside 5'-triphosphate + ADP. The enzyme catalyses a ribonucleoside 5'-diphosphate + ATP = a ribonucleoside 5'-triphosphate + ADP. Its function is as follows. Major role in the synthesis of nucleoside triphosphates other than ATP. The ATP gamma phosphate is transferred to the NDP beta phosphate via a ping-pong mechanism, using a phosphorylated active-site intermediate. The polypeptide is Nucleoside diphosphate kinase (Parabacteroides distasonis (strain ATCC 8503 / DSM 20701 / CIP 104284 / JCM 5825 / NCTC 11152)).